The following is a 303-amino-acid chain: Protease HtpX (303 aa).

The next 2 helical transmembrane spans lie at 4 to 24 (IGLFLLTNLAVLVVFSIVFGI) and 42 to 62 (IASLAVMCAVYGMIGSMISLF). Zn(2+) is bound at residue His-149. Glu-150 is an active-site residue. Residue His-153 participates in Zn(2+) binding. Helical transmembrane passes span 157–177 (GDMVTLALIQGVVNAFVMFFA) and 200–220 (FVTSIVMDILLGFLASAIVMW). Glu-226 is a Zn(2+) binding site.

This sequence belongs to the peptidase M48B family. Zn(2+) serves as cofactor.

It localises to the cell inner membrane. The polypeptide is Protease HtpX (Psychrobacter sp. (strain PRwf-1)).